Consider the following 180-residue polypeptide: GTP cyclohydrolase 1 (180 aa).

3 residues coordinate Zn(2+): C71, H74, and C142.

It belongs to the GTP cyclohydrolase I family. Homomer.

It carries out the reaction GTP + H2O = 7,8-dihydroneopterin 3'-triphosphate + formate + H(+). The protein operates within cofactor biosynthesis; 7,8-dihydroneopterin triphosphate biosynthesis; 7,8-dihydroneopterin triphosphate from GTP: step 1/1. The sequence is that of GTP cyclohydrolase 1 from Helicobacter pylori (strain P12).